Reading from the N-terminus, the 87-residue chain is NAD(P)H-quinone oxidoreductase subunit O (87 aa).

A compositionally biased stretch (basic and acidic residues) spans 1–10; sequence MSEQTGKVDD. The disordered stretch occupies residues 1–26; sequence MSEQTGKVDDSQSPPKVQKKLRKGDL.

It belongs to the complex I NdhO subunit family. NDH-1 can be composed of about 15 different subunits; different subcomplexes with different compositions have been identified which probably have different functions.

Its subcellular location is the cellular thylakoid membrane. The enzyme catalyses a plastoquinone + NADH + (n+1) H(+)(in) = a plastoquinol + NAD(+) + n H(+)(out). It catalyses the reaction a plastoquinone + NADPH + (n+1) H(+)(in) = a plastoquinol + NADP(+) + n H(+)(out). Its function is as follows. NDH-1 shuttles electrons from an unknown electron donor, via FMN and iron-sulfur (Fe-S) centers, to quinones in the respiratory and/or the photosynthetic chain. The immediate electron acceptor for the enzyme in this species is believed to be plastoquinone. Couples the redox reaction to proton translocation, and thus conserves the redox energy in a proton gradient. Cyanobacterial NDH-1 also plays a role in inorganic carbon-concentration. The protein is NAD(P)H-quinone oxidoreductase subunit O of Prochlorococcus marinus (strain NATL1A).